Consider the following 286-residue polypeptide: Beta-lactamase SHV-29 (286 aa).

An N-terminal signal peptide occupies residues 1–21 (MRYIRLCIISLLATLPLAVHA). Ser66 acts as the Acyl-ester intermediate in catalysis. Cys73 and Cys119 are disulfide-bonded. The active-site Proton acceptor is Glu164. Position 230–232 (230–232 (KTG)) interacts with substrate.

It belongs to the class-A beta-lactamase family.

The catalysed reaction is a beta-lactam + H2O = a substituted beta-amino acid. The polypeptide is Beta-lactamase SHV-29 (bla) (Klebsiella pneumoniae).